Here is a 362-residue protein sequence, read N- to C-terminus: Tyrosyl-DNA phosphodiesterase 2 (362 aa).

An N-acetylmethionine modification is found at methionine 1. Positions 1-20 (MELGSCLEGGREAAEEEGEP) are disordered. Glycyl lysine isopeptide (Lys-Gly) (interchain with G-Cter in SUMO2) cross-links involve residues lysine 23 and lysine 82. The segment at 87-109 (LTNEETTDSTTSKISPSEDTQQE) is disordered. Phosphothreonine; by ACVR1B occurs at positions 88 and 92. Residues 94 to 109 (DSTTSKISPSEDTQQE) are compositionally biased toward polar residues. Serine 95 bears the Phosphoserine mark. The tract at residues 120–124 (NIDGL) is interaction with 5' end of substrate DNA. Aspartate 122 and glutamate 152 together coordinate Mg(2+). The segment at 226–231 (HLESTR) is interaction with 5' end of substrate DNA. The active-site Proton donor/acceptor is the aspartate 262. The tract at residues 264 to 266 (NLR) is interaction with 5' end of substrate DNA.

The protein belongs to the CCR4/nocturin family. As to quaternary structure, interacts with TRAF2, TRAF3, TRAF5, TRAF6, TNFRSF8/CD30, TNFRSF5/CD40, TNFRSF1B/TNF-R75, ETS1, ETS2, FLI1, SMAD3 and ACVR1B/ALK4. (Microbial infection) Interacts with Hantaan hantavirus nucleoprotein. In terms of assembly, (Microbial infection) Interacts with Seoul hantavirus nucleoprotein. Requires Mg(2+) as cofactor. Mn(2+) is required as a cofactor. In terms of processing, ubiquitinated by TRAF6. Widely expressed. Highly expressed in various brain regions, including the frontal and occipital lobes, the hippocampus, the striatum and the cerebellum.

The protein localises to the nucleus. Its subcellular location is the PML body. It is found in the nucleolus. It localises to the cytoplasm. Functionally, DNA repair enzyme that can remove a variety of covalent adducts from DNA through hydrolysis of a 5'-phosphodiester bond, giving rise to DNA with a free 5' phosphate. Catalyzes the hydrolysis of dead-end complexes between DNA and the topoisomerase 2 (TOP2) active site tyrosine residue. The 5'-tyrosyl DNA phosphodiesterase activity can enable the repair of TOP2-induced DNA double-strand breaks/DSBs without the need for nuclease activity, creating a 'clean' DSB with 5'-phosphate termini that are ready for ligation. Thereby, protects the transcription of many genes involved in neurological development and maintenance from the abortive activity of TOP2. Hydrolyzes 5'-phosphoglycolates on protruding 5' ends on DSBs due to DNA damage by radiation and free radicals. Has preference for single-stranded DNA or duplex DNA with a 4 base pair overhang as substrate. Acts as a regulator of ribosome biogenesis following stress. Also has 3'-tyrosyl DNA phosphodiesterase activity, but less efficiently and much slower than TDP1. Constitutes the major if not only 5'-tyrosyl-DNA phosphodiesterase in cells. Also acts as an adapter by participating in the specific activation of MAP3K7/TAK1 in response to TGF-beta: associates with components of the TGF-beta receptor-TRAF6-TAK1 signaling module and promotes their ubiquitination dependent complex formation. Involved in non-canonical TGF-beta induced signaling routes. May also act as a negative regulator of ETS1 and may inhibit NF-kappa-B activation. In terms of biological role, (Microbial infection) Used by picornaviruses to remove the small polypeptide, VPg (virus Protein genome-linked, the primer for viral RNA synthesis), from the genomic RNA of the virus. Acts as a 5'-tyrosyl RNA phosphodiesterase and cleaves the covalent VPg-Tyr-RNA bond. This cleavage would play a role in viral replication and occur in viral replication vesicles, but would not act on viral mRNA. This Homo sapiens (Human) protein is Tyrosyl-DNA phosphodiesterase 2.